A 270-amino-acid chain; its full sequence is NAD kinase (270 aa).

Asp-61 functions as the Proton acceptor in the catalytic mechanism. NAD(+) is bound by residues 61-62, 133-134, Arg-144, Arg-163, Asp-165, and 176-181; these read DG, NE, and TAYNLS.

Belongs to the NAD kinase family. The cofactor is a divalent metal cation.

Its subcellular location is the cytoplasm. The catalysed reaction is NAD(+) + ATP = ADP + NADP(+) + H(+). Its function is as follows. Involved in the regulation of the intracellular balance of NAD and NADP, and is a key enzyme in the biosynthesis of NADP. Catalyzes specifically the phosphorylation on 2'-hydroxyl of the adenosine moiety of NAD to yield NADP. The sequence is that of NAD kinase from Natronomonas pharaonis (strain ATCC 35678 / DSM 2160 / CIP 103997 / JCM 8858 / NBRC 14720 / NCIMB 2260 / Gabara) (Halobacterium pharaonis).